The chain runs to 405 residues: MTTLGTPYSPHATKVMLLGSGELGKEVLIALQRLGVETIAVDRYENAPGQQVAHHARTITMSDPAQLKALIEAEKPDLVVPEIEAIATPMLEELEAAGVVTVIPTARAARLTMDREGIRRLAAETLGLATSPYRFCDSQQELQAAIDGTDGQPAIGFPCVVKPVMSSSGKGQSKLDGPDDVAKAWDYAMAGGRVSHGRVIVEGFIDFDYEITQLTVRAKGADGQVQTHFCDPIGHIQQSGDYVESWQPHPMHPAALQKSRDIAKAVTDDLGGLGLFGVELFVKGEQVWFSEVSPRPHDTGLVTLATQWQSEFELHARAILGLPVDASLRNPGASAVIYGGQDAEGLVFDGVDEALAVPGTDLRLFGKPESFVKRRMGVALARAQDVEQARTNAKLAAGKVKPRKP.

Residues 22 to 23 and Glu-82 contribute to the N(1)-(5-phospho-beta-D-ribosyl)glycinamide site; that span reads EL. ATP contacts are provided by residues Arg-115, Lys-162, 167–172, 202–205, and Glu-210; these read SSGKGQ and EGFI. The 201-residue stretch at 120–320 folds into the ATP-grasp domain; that stretch reads RLAAETLGLA…EFELHARAIL (201 aa). Mg(2+)-binding residues include Glu-279 and Glu-291. N(1)-(5-phospho-beta-D-ribosyl)glycinamide is bound by residues Asp-298, Lys-367, and 374 to 375; that span reads RR.

It belongs to the PurK/PurT family. As to quaternary structure, homodimer.

The catalysed reaction is N(1)-(5-phospho-beta-D-ribosyl)glycinamide + formate + ATP = N(2)-formyl-N(1)-(5-phospho-beta-D-ribosyl)glycinamide + ADP + phosphate + H(+). It functions in the pathway purine metabolism; IMP biosynthesis via de novo pathway; N(2)-formyl-N(1)-(5-phospho-D-ribosyl)glycinamide from N(1)-(5-phospho-D-ribosyl)glycinamide (formate route): step 1/1. Functionally, involved in the de novo purine biosynthesis. Catalyzes the transfer of formate to 5-phospho-ribosyl-glycinamide (GAR), producing 5-phospho-ribosyl-N-formylglycinamide (FGAR). Formate is provided by PurU via hydrolysis of 10-formyl-tetrahydrofolate. In Delftia acidovorans (strain DSM 14801 / SPH-1), this protein is Formate-dependent phosphoribosylglycinamide formyltransferase.